Reading from the N-terminus, the 188-residue chain is NADH-quinone oxidoreductase subunit I (188 aa).

4Fe-4S ferredoxin-type domains follow at residues 44-74 (LNRYADGLEKCIGCELCAWACPADAIFVEGA) and 90-119 (RVYQINYLRCIGCGLCIEACPTRALTMTNE). [4Fe-4S] cluster-binding residues include C54, C57, C60, C64, C99, C102, C105, and C109. Residues 144-188 (GMVDSPHPMAPGTTAEDYYRGTVTGGAAPASQDEPEADDTAGDRP) are disordered. Residues 176-188 (DEPEADDTAGDRP) are compositionally biased toward acidic residues.

It belongs to the complex I 23 kDa subunit family. In terms of assembly, NDH-1 is composed of 14 different subunits. Subunits NuoA, H, J, K, L, M, N constitute the membrane sector of the complex. [4Fe-4S] cluster is required as a cofactor.

It is found in the cell membrane. The catalysed reaction is a quinone + NADH + 5 H(+)(in) = a quinol + NAD(+) + 4 H(+)(out). NDH-1 shuttles electrons from NADH, via FMN and iron-sulfur (Fe-S) centers, to quinones in the respiratory chain. The immediate electron acceptor for the enzyme in this species is believed to be ubiquinone. Couples the redox reaction to proton translocation (for every two electrons transferred, four hydrogen ions are translocated across the cytoplasmic membrane), and thus conserves the redox energy in a proton gradient. The protein is NADH-quinone oxidoreductase subunit I of Rhodococcus opacus (strain B4).